The following is a 210-amino-acid chain: Phosphoheptose isomerase (210 aa).

The region spanning 38–202 (IAACLARGGK…ENVAALAPYL (165 aa)) is the SIS domain. Substrate is bound at residue 53 to 55 (NGG). Positions 62 and 66 each coordinate Zn(2+). Substrate contacts are provided by residues glutamate 66, 95–96 (ND), 121–123 (STS), serine 126, and glutamine 173. Zn(2+)-binding residues include glutamine 173 and histidine 181.

The protein belongs to the SIS family. GmhA subfamily. In terms of assembly, homotetramer. Zn(2+) serves as cofactor.

The protein localises to the cytoplasm. The catalysed reaction is 2 D-sedoheptulose 7-phosphate = D-glycero-alpha-D-manno-heptose 7-phosphate + D-glycero-beta-D-manno-heptose 7-phosphate. Its pathway is carbohydrate biosynthesis; D-glycero-D-manno-heptose 7-phosphate biosynthesis; D-glycero-alpha-D-manno-heptose 7-phosphate and D-glycero-beta-D-manno-heptose 7-phosphate from sedoheptulose 7-phosphate: step 1/1. Catalyzes the isomerization of sedoheptulose 7-phosphate in D-glycero-D-manno-heptose 7-phosphate. The chain is Phosphoheptose isomerase from Desulfovibrio desulfuricans (strain ATCC 27774 / DSM 6949 / MB).